Reading from the N-terminus, the 718-residue chain is SANT and BTB domain regulator of class switch recombination (718 aa).

One can recognise an SANT domain in the interval 21–59 (DMILYPLIGIPQTINWETIARLVPGLTPKECAKRFDELK). Positions 118-134 (ASTRNCSSESENCTTHN) are enriched in polar residues. Positions 118–142 (ASTRNCSSESENCTTHNGGEMTEES) are disordered. Residues 147-255 (MVIHVCDEAK…QCIQYCHKNM (109 aa)) enclose the BTB domain. The segment covering 555–576 (SEEEEYTTGSEVTEDEVGDEEE) has biased composition (acidic residues). Disordered regions lie at residues 555 to 622 (SEEE…SPFV) and 692 to 718 (SVPV…GRPA). Over residues 580-595 (KQRKKEKPKKFTRQPK) the composition is skewed to basic residues. The span at 604 to 615 (QRKEKALEKSAS) shows a compositional bias: basic and acidic residues.

It belongs to the KIAA1841 family. As to quaternary structure, homodimer. Interacts (via the BTB domain) with HDAC1 and NCOR2.

Its function is as follows. Negatively regulates class switch recombination or isotype switching in splenic B-cells. In Homo sapiens (Human), this protein is SANT and BTB domain regulator of class switch recombination.